The primary structure comprises 562 residues: Nucleoprotein (562 aa).

The segment at 54–237 (LRKTKRTDGD…ITKDESAINI (184 aa)) is binding site for the cap structure m7GTP. 2 residues coordinate Mn(2+): D381 and E383. Positions 391, 498, 501, and 523 each coordinate Zn(2+). Mn(2+) is bound at residue D527.

The protein belongs to the arenaviridae nucleocapsid protein family. In terms of assembly, homomultimerizes to form the nucleocapsid. Binds to viral genomic RNA. Interacts with glycoprotein G2. Interacts with protein Z; this interaction probably directs the encapsidated genome to budding sites. Interacts with protein L; this interaction does not interfere with Z-L interaction. Interacts with host IKBKE (via Protein kinase domain); the interaction inhibits IKBKE kinase activity.

It is found in the virion. It localises to the host cytoplasm. In terms of biological role, encapsidates the genome, protecting it from nucleases. The encapsidated genomic RNA is termed the nucleocapsid (NC). Serves as template for viral transcription and replication. The increased presence of protein N in host cell does not seem to trigger the switch from transcription to replication as observed in other negative strain RNA viruses. Through the interaction with host IKBKE, strongly inhibits the phosphorylation and nuclear translocation of host IRF3, a protein involved in interferon activation pathway, leading to the inhibition of interferon-beta and IRF3-dependent promoters activation. Also encodes a functional 3'-5' exoribonuclease that degrades preferentially dsRNA substrates and thereby participates in the suppression of interferon induction. This chain is Nucleoprotein, found in Homo sapiens (Human).